The primary structure comprises 150 residues: Large ribosomal subunit protein bL9 (150 aa).

This sequence belongs to the bacterial ribosomal protein bL9 family.

In terms of biological role, binds to the 23S rRNA. The sequence is that of Large ribosomal subunit protein bL9 from Hamiltonella defensa subsp. Acyrthosiphon pisum (strain 5AT).